Consider the following 577-residue polypeptide: Proline--tRNA ligase (577 aa).

Belongs to the class-II aminoacyl-tRNA synthetase family. ProS type 1 subfamily. Homodimer.

Its subcellular location is the cytoplasm. It catalyses the reaction tRNA(Pro) + L-proline + ATP = L-prolyl-tRNA(Pro) + AMP + diphosphate. Catalyzes the attachment of proline to tRNA(Pro) in a two-step reaction: proline is first activated by ATP to form Pro-AMP and then transferred to the acceptor end of tRNA(Pro). As ProRS can inadvertently accommodate and process non-cognate amino acids such as alanine and cysteine, to avoid such errors it has two additional distinct editing activities against alanine. One activity is designated as 'pretransfer' editing and involves the tRNA(Pro)-independent hydrolysis of activated Ala-AMP. The other activity is designated 'posttransfer' editing and involves deacylation of mischarged Ala-tRNA(Pro). The misacylated Cys-tRNA(Pro) is not edited by ProRS. This is Proline--tRNA ligase from Chlamydia felis (strain Fe/C-56) (Chlamydophila felis).